Reading from the N-terminus, the 270-residue chain is Oxidoreductase NAD-binding domain-containing protein 1 (270 aa).

An FAD-binding FR-type domain is found at 20-123 (MELFSARVCD…VGGNFYFDPQ (104 aa)). 137–142 (GVGINP) serves as a coordination point for NAD(+).

In Danio rerio (Zebrafish), this protein is Oxidoreductase NAD-binding domain-containing protein 1 (oxnad1).